Reading from the N-terminus, the 122-residue chain is Small ribosomal subunit protein uS13 (122 aa).

A disordered region spans residues 99 to 122 (RGQRTHTNARTRKGPAKAIAGKKK).

Belongs to the universal ribosomal protein uS13 family. In terms of assembly, part of the 30S ribosomal subunit. Forms a loose heterodimer with protein S19. Forms two bridges to the 50S subunit in the 70S ribosome.

In terms of biological role, located at the top of the head of the 30S subunit, it contacts several helices of the 16S rRNA. In the 70S ribosome it contacts the 23S rRNA (bridge B1a) and protein L5 of the 50S subunit (bridge B1b), connecting the 2 subunits; these bridges are implicated in subunit movement. Contacts the tRNAs in the A and P-sites. This is Small ribosomal subunit protein uS13 from Cereibacter sphaeroides (strain ATCC 17025 / ATH 2.4.3) (Rhodobacter sphaeroides).